Reading from the N-terminus, the 3767-residue chain is Transmembrane cell adhesion receptor mua-3 (3767 aa).

The first 24 residues, 1–24, serve as a signal peptide directing secretion; sequence MQAGISIFFLFLHIPIFFVNCSNS. Topologically, residues 25–3417 are extracellular; that stretch reads TSCVAREEFQ…CQVAPSNASL (3393 aa). The LDL-receptor class A 1 domain occupies 26-63; the sequence is SCVAREEFQCKMDDSCISMKKWQDGVDDCYDGSDEVCL. Disulfide bonds link Cys27/Cys41, Cys35/Cys54, Cys62/Cys76, Cys69/Cys89, Cys97/Cys110, Cys104/Cys123, Cys131/Cys144, Cys138/Cys157, Cys165/Cys179, and Cys172/Cys192. 3 LDL-receptor class A domains span residues 96 to 132, 133 to 166, and 167 to 209; these read GCPA…EPCA, QNQF…EECT, and TSQF…ANCT. 2 N-linked (GlcNAc...) asparagine glycosylation sites follow: Asn201 and Asn207. 17 consecutive EGF-like domains span residues 225 to 268, 375 to 416, 418 to 466, 468 to 517, 519 to 566, 614 to 663, 665 to 713, 714 to 760, 762 to 810, 816 to 860, 861 to 908, 910 to 961, 963 to 1012, 1029 to 1070, 1071 to 1118, 1120 to 1168, and 1170 to 1219; these read KLKF…DKCI, NRDD…GTCR, LIDE…RKCR, LINE…RNCT, AINE…RKCV, RANP…RKCV, AVDE…RSCK, KADM…RVCR, VVNE…KNCV, DPPE…GRCV, VINE…RICR, RVNE…RRCI, AVNE…RICT, TDDG…GSCR, VYSA…RICK, LINE…RQCT, and SNNE…RVCT. Cystine bridges form between Cys229-Cys243, Cys235-Cys252, Cys254-Cys267, Cys381-Cys392, Cys386-Cys402, Cys404-Cys415, Cys422-Cys435, Cys429-Cys444, Cys446-Cys465, Cys472-Cys486, Cys480-Cys495, Cys497-Cys516, Cys523-Cys536, Cys530-Cys545, Cys547-Cys565, Cys618-Cys632, Cys626-Cys642, Cys644-Cys662, Cys669-Cys682, Cys676-Cys691, Cys693-Cys712, Cys718-Cys729, Cys723-Cys738, Cys740-Cys759, Cys766-Cys779, Cys773-Cys788, Cys790-Cys809, Cys820-Cys836, Cys828-Cys845, Cys847-Cys859, Cys865-Cys879, Cys873-Cys888, Cys890-Cys907, Cys914-Cys930, Cys924-Cys939, Cys941-Cys960, Cys967-Cys981, Cys975-Cys990, Cys992-Cys1011, Cys1033-Cys1046, Cys1040-Cys1055, Cys1057-Cys1069, Cys1075-Cys1087, Cys1081-Cys1096, Cys1098-Cys1117, Cys1124-Cys1137, Cys1131-Cys1146, Cys1148-Cys1167, Cys1174-Cys1188, Cys1182-Cys1197, and Cys1199-Cys1218. Asn383 is a glycosylation site (N-linked (GlcNAc...) asparagine). Asn515 carries N-linked (GlcNAc...) asparagine glycosylation. A VWFA domain is found at 1230–1406; it reads DLVFLIDGSG…DLDTRLRSMI (177 aa). Asn1350 carries N-linked (GlcNAc...) asparagine glycosylation. EGF-like domains are found at residues 1421-1466, 1466-1510, 1521-1562, 1563-1608, 1608-1656, 1658-1706, 1708-1755, 1759-1807, 1809-1860, 1862-1911, 1913-1961, 1963-2011, 2014-2062, 2068-2112, 2113-2160, 2162-2208, 2210-2258, 2260-2308, 2310-2358, 2360-2408, 2409-2455, 2456-2504, 2513-2563, 2565-2616, 2618-2666, 2668-2714, 2716-2763, 2763-2811, and 2833-2872; these read SEDV…RVCG, GGDL…GFCV, HDAN…GQCA, YPGS…DICL, LKNE…RVCV, LQNE…MVCK, LVNE…RRCE, TNDK…RLCI, VIPE…RLCK, LQNE…RKCK, LINE…RRCL, RINE…RICR, LVDE…RLCQ, PPPE…GSCS, IINE…RMCK, MVNE…RICK, LTNE…RACR, LVNE…RVCL, FINE…RVCV, LVDE…RVCS, APEV…RVCV, RNNA…RVCE, PRHP…RLCV, TEPV…RICK, LINE…RICS, SVNE…HRCS, MINE…RICR, RLNE…RICI, and REFP…GKCQ. 66 disulfide bridges follow: Cys1425-Cys1441, Cys1433-Cys1450, Cys1452-Cys1465, Cys1470-Cys1484, Cys1478-Cys1494, Cys1496-Cys1509, Cys1525-Cys1538, Cys1532-Cys1547, Cys1549-Cys1561, Cys1567-Cys1583, Cys1575-Cys1592, Cys1594-Cys1607, Cys1612-Cys1625, Cys1619-Cys1634, Cys1636-Cys1655, Cys1662-Cys1675, Cys1669-Cys1684, Cys1686-Cys1705, Cys1712-Cys1726, Cys1720-Cys1735, Cys1737-Cys1754, Cys1763-Cys1776, Cys1770-Cys1786, Cys1788-Cys1806, Cys1813-Cys1829, Cys1821-Cys1838, Cys1840-Cys1859, Cys1866-Cys1880, Cys1873-Cys1889, Cys1891-Cys1910, Cys1917-Cys1930, Cys1924-Cys1939, Cys1941-Cys1960, Cys1967-Cys1980, Cys1974-Cys1989, Cys1991-Cys2010, Cys2018-Cys2031, Cys2025-Cys2040, Cys2042-Cys2061, Cys2072-Cys2088, Cys2080-Cys2097, Cys2099-Cys2111, Cys2117-Cys2131, Cys2125-Cys2140, Cys2142-Cys2159, Cys2166-Cys2180, Cys2174-Cys2189, Cys2191-Cys2207, Cys2214-Cys2228, Cys2222-Cys2237, Cys2239-Cys2257, Cys2264-Cys2278, Cys2272-Cys2287, Cys2289-Cys2307, Cys2314-Cys2327, Cys2321-Cys2336, Cys2338-Cys2357, Cys2364-Cys2377, Cys2371-Cys2386, Cys2388-Cys2407, Cys2413-Cys2425, Cys2419-Cys2435, Cys2437-Cys2454, Cys2460-Cys2474, Cys2468-Cys2483, and Cys2485-Cys2503. The disordered stretch occupies residues 2492–2521; that stretch reads RSPDSSQRGRVCEPPPPPSPPPRHPCQDPE. Pro residues predominate over residues 2504 to 2515; the sequence is EPPPPPSPPPRH. 21 cysteine pairs are disulfide-bonded: Cys2517-Cys2531, Cys2525-Cys2541, Cys2543-Cys2562, Cys2569-Cys2583, Cys2577-Cys2594, Cys2596-Cys2615, Cys2622-Cys2636, Cys2630-Cys2645, Cys2647-Cys2665, Cys2672-Cys2686, Cys2680-Cys2695, Cys2697-Cys2713, Cys2720-Cys2734, Cys2728-Cys2743, Cys2745-Cys2762, Cys2767-Cys2781, Cys2775-Cys2790, Cys2792-Cys2810, Cys2837-Cys2850, Cys2842-Cys2856, and Cys2858-Cys2871. One can recognise an SEA 1 domain in the interval 2873–2999; sequence EVQETPFELR…GSLRVASDTD (127 aa). A glycan (N-linked (GlcNAc...) asparagine) is linked at Asn2944. The 40-residue stretch at 3009 to 3048 folds into the EGF-like 47 domain; the sequence is EWGNCGGMSCKEHLKEVCIAGHICGCPDGMKRRDANSECR. Intrachain disulfides connect Cys3013/Cys3026, Cys3018/Cys3032, and Cys3034/Cys3047. In terms of domain architecture, SEA 2 spans 3049–3174; the sequence is VVESWNVPLW…SELYLNPTQP (126 aa). Residues Asn3120 and Asn3130 are each glycosylated (N-linked (GlcNAc...) asparagine). 3 consecutive EGF-like domains span residues 3176–3220, 3224–3272, and 3272–3324; these read PFNP…KKCL, GFNE…SLCV, and VLDY…TLCM. 15 disulfide bridges follow: Cys3180-Cys3191, Cys3185-Cys3201, Cys3203-Cys3219, Cys3228-Cys3242, Cys3236-Cys3251, Cys3253-Cys3271, Cys3276-Cys3288, Cys3282-Cys3297, Cys3299-Cys3323, Cys3332-Cys3345, Cys3339-Cys3354, Cys3356-Cys3372, Cys3377-Cys3386, Cys3380-Cys3397, and Cys3399-Cys3408. Asn3285 is a glycosylation site (N-linked (GlcNAc...) asparagine). Residues 3328–3373 form the EGF-like 51; calcium-binding domain; it reads DVDECALGLNNCSGVAHCIDRAVGYTCKCPDGYIDGNPDEPGRVCG. An N-linked (GlcNAc...) asparagine; atypical glycan is attached at Asn3337. N-linked (GlcNAc...) asparagine glycosylation is present at Asn3338. The 37-residue stretch at 3373–3409 folds into the EGF-like 52 domain; the sequence is GALLCDLCNAHGDCVHNTATNNITCVCTDGWTGPQCQ. Asn3394 is a glycosylation site (N-linked (GlcNAc...) asparagine). Asn3414 carries N-linked (GlcNAc...) asparagine glycosylation. Residues 3418-3438 form a helical membrane-spanning segment; it reads VLLILLALLFLLLTLCCLLYF. At 3439 to 3767 the chain is on the cytoplasmic side; that stretch reads CTKCHCFKGR…SQTSTHVTKK (329 aa). Positions 3582 to 3729 are disordered; sequence TTTTDEQGNT…EEDVEHSVGD (148 aa). Over residues 3588 to 3597 the composition is skewed to polar residues; that stretch reads QGNTIVTTTE. The segment covering 3630-3665 has biased composition (low complexity); it reads QSQSQQQQSMSQGMSQSMSQHATSAGYSSSGMESSA. Positions 3675–3684 are enriched in basic and acidic residues; that stretch reads HTGERERGGS. Low complexity predominate over residues 3690–3702; it reads IGRARGMAAASSG.

As to expression, expressed in the hypodermis at the sites of muscle contact, in striated muscles including body wall muscles, the anal sphincter muscles and the junctions between the anal sphincter muscle and rectal cuticle. Also expressed in non-muscle cells including the excretory duct cell and pore cells.

The protein resides in the cell membrane. Its subcellular location is the cell junction. It is found in the hemidesmosome. Its function is as follows. Involved in cell adhesion and required for organ positioning and attachment. At the hypodermal surface, required for attachment of the hypdermermis to the basal cuticle in postembryonic development, possibly through intermediate filaments of the cytoskeleton. The chain is Transmembrane cell adhesion receptor mua-3 from Caenorhabditis elegans.